The sequence spans 444 residues: Phosphoglucosamine mutase (444 aa).

S102 (phosphoserine intermediate) is an active-site residue. Residues S102, D241, D243, and D245 each contribute to the Mg(2+) site. Phosphoserine is present on S102.

It belongs to the phosphohexose mutase family. Mg(2+) serves as cofactor. Post-translationally, activated by phosphorylation.

It catalyses the reaction alpha-D-glucosamine 1-phosphate = D-glucosamine 6-phosphate. In terms of biological role, catalyzes the conversion of glucosamine-6-phosphate to glucosamine-1-phosphate. This Actinobacillus succinogenes (strain ATCC 55618 / DSM 22257 / CCUG 43843 / 130Z) protein is Phosphoglucosamine mutase.